The sequence spans 349 residues: Homeobox-leucine zipper protein HOX7 (349 aa).

Residues 42-186 form a disordered region; the sequence is RATRRDEQDD…PKQKSDLANR (145 aa). Polar residues-rich tracts occupy residues 89–99 and 121–135; these read SAETGSANSEM and SSPSSMQEASTRQQV. The homeobox DNA-binding region spans 150–209; it reads GARKKLRLSKEQSSFLEDSFKEHSTLTPKQKSDLANRLNLRPRQVEVWFQNRRARTKLKQ. Residues 167–183 show a composition bias toward basic and acidic residues; sequence DSFKEHSTLTPKQKSDL. The leucine-zipper stretch occupies residues 208–252; the sequence is KQTEVDCEHLKRCCERLTRENRRLQREVAELRGTLRTTTSSYPPL.

This sequence belongs to the HD-ZIP homeobox family. Class II subfamily. Homodimer. May form a heterodimer with HOX1, HOX2 or HOX3. In terms of tissue distribution, expressed in seedlings, roots, leaves, nodes, internodes, flowers and embryo.

It is found in the nucleus. Functionally, probable transcription factor that binds to the DNA sequence 5'-CAAT[GC]ATTG-3'. This is Homeobox-leucine zipper protein HOX7 (HOX7) from Oryza sativa subsp. japonica (Rice).